A 230-amino-acid polypeptide reads, in one-letter code: A-type ATP synthase subunit D (230 aa).

The interval 204 to 230 is disordered; that stretch reads AKKEEEEDALAAEEEAEEEPEAVTADD. Over residues 208–230 the composition is skewed to acidic residues; that stretch reads EEEDALAAEEEAEEEPEAVTADD.

This sequence belongs to the V-ATPase D subunit family. As to quaternary structure, has multiple subunits with at least A(3), B(3), C, D, E, F, H, I and proteolipid K(x).

The protein resides in the cell membrane. Component of the A-type ATP synthase that produces ATP from ADP in the presence of a proton gradient across the membrane. This is A-type ATP synthase subunit D from Haloarcula marismortui (strain ATCC 43049 / DSM 3752 / JCM 8966 / VKM B-1809) (Halobacterium marismortui).